Reading from the N-terminus, the 348-residue chain is Phenylalanine--tRNA ligase alpha subunit (348 aa).

Residue E259 participates in Mg(2+) binding.

This sequence belongs to the class-II aminoacyl-tRNA synthetase family. Phe-tRNA synthetase alpha subunit type 1 subfamily. As to quaternary structure, tetramer of two alpha and two beta subunits. Mg(2+) serves as cofactor.

Its subcellular location is the cytoplasm. The enzyme catalyses tRNA(Phe) + L-phenylalanine + ATP = L-phenylalanyl-tRNA(Phe) + AMP + diphosphate + H(+). This Lacticaseibacillus casei (strain BL23) (Lactobacillus casei) protein is Phenylalanine--tRNA ligase alpha subunit.